A 336-amino-acid polypeptide reads, in one-letter code: Aspartate carbamoyltransferase catalytic subunit (336 aa).

The carbamoyl phosphate site is built by R72 and T73. K100 provides a ligand contact to L-aspartate. Carbamoyl phosphate is bound by residues R122, H155, and Q158. Residues R188 and R242 each coordinate L-aspartate. 2 residues coordinate carbamoyl phosphate: G288 and P289.

Belongs to the aspartate/ornithine carbamoyltransferase superfamily. ATCase family. In terms of assembly, heterododecamer (2C3:3R2) of six catalytic PyrB chains organized as two trimers (C3), and six regulatory PyrI chains organized as three dimers (R2).

The catalysed reaction is carbamoyl phosphate + L-aspartate = N-carbamoyl-L-aspartate + phosphate + H(+). It functions in the pathway pyrimidine metabolism; UMP biosynthesis via de novo pathway; (S)-dihydroorotate from bicarbonate: step 2/3. Functionally, catalyzes the condensation of carbamoyl phosphate and aspartate to form carbamoyl aspartate and inorganic phosphate, the committed step in the de novo pyrimidine nucleotide biosynthesis pathway. In Lactobacillus leichmannii, this protein is Aspartate carbamoyltransferase catalytic subunit.